A 112-amino-acid polypeptide reads, in one-letter code: Prothymosin alpha-B (112 aa).

The segment at 1–112 is disordered; the sequence is MSDTAVDASV…TKKQKTDEDD (112 aa). Basic and acidic residues predominate over residues 9–35; it reads SVEKSTKDLKAKEKEVVEEAENGKDKP. Acidic residues-rich tracts occupy residues 41-83 and 92-101; these read ENEE…DEVE and EDDEDDDDDV. Residues 102–112 show a composition bias toward basic and acidic residues; it reads ETKKQKTDEDD.

Belongs to the pro/parathymosin family.

The protein resides in the nucleus. This is Prothymosin alpha-B (ptma-b) from Xenopus laevis (African clawed frog).